The following is a 349-amino-acid chain: Macrophage-capping protein (349 aa).

M1 bears the N-acetylmethionine mark. 3 Gelsolin-like repeats span residues 28-107 (KLKP…DLFM), 147-222 (KNIR…AEMI), and 264-342 (LTKV…PIFK). Positions 138–147 (RKLYQVKGKK) match the Nuclear localization signal motif. Position 338 is a phosphoserine (S338).

The protein belongs to the villin/gelsolin family. As to quaternary structure, interacts with NUP62. Interacts with NUTF2 and RAN; involved in CAPG nuclear import. In terms of processing, phosphorylated.

Its subcellular location is the nucleus. The protein localises to the cytoplasm. It localises to the melanosome. It is found in the cell projection. The protein resides in the lamellipodium. Its subcellular location is the ruffle. Functionally, calcium-sensitive protein which reversibly blocks the barbed ends of actin filaments but does not sever preformed actin filaments. May play an important role in macrophage function. May play a role in regulating cytoplasmic and/or nuclear structures through potential interactions with actin. May bind DNA. Uncapping occurs either when Ca(2+) falls or when the concentration of polyphosphoinositide rises, both at low and high Ca(2+). This is Macrophage-capping protein (Capg) from Rattus norvegicus (Rat).